A 115-amino-acid chain; its full sequence is Phosphoribosyl-AMP cyclohydrolase (115 aa).

A Mg(2+)-binding site is contributed by Asp-80. Cys-81 lines the Zn(2+) pocket. The Mg(2+) site is built by Asp-82 and Asp-84. Zn(2+) is bound by residues Cys-97 and Cys-104.

The protein belongs to the PRA-CH family. Homodimer. It depends on Mg(2+) as a cofactor. The cofactor is Zn(2+).

The protein resides in the cytoplasm. It catalyses the reaction 1-(5-phospho-beta-D-ribosyl)-5'-AMP + H2O = 1-(5-phospho-beta-D-ribosyl)-5-[(5-phospho-beta-D-ribosylamino)methylideneamino]imidazole-4-carboxamide. It participates in amino-acid biosynthesis; L-histidine biosynthesis; L-histidine from 5-phospho-alpha-D-ribose 1-diphosphate: step 3/9. Its function is as follows. Catalyzes the hydrolysis of the adenine ring of phosphoribosyl-AMP. This Nocardia farcinica (strain IFM 10152) protein is Phosphoribosyl-AMP cyclohydrolase.